The chain runs to 864 residues: MAVDKGRRPVPPERRAQGRKRAEPGDVTIRETRTRPVHTPEPEPELLAKDGILELEDDDDNDDDDDDDDDDKSNHHDGAPKNEDDMEAFPELVSGKDKDDDGDEDEEEDDEDEDEDASDDEAFDSDDLENWDEEADAKYGDADLSDDDDVKEGDAALERMIARARVKPDESERTTNKLGIDTGVAARFYDESRNDDGSKRGRVVQSHVTGMPKVEYPPIEPEYDSDSSTEDVPNRIGQVPLSWYDDLPHIGYDINGRRVLRPAQGDELDKFLDSVEGEGDGWFSAHDKTSGQDVKLTDEELDIIQRLERAQIPVEAYDPYEPATDWFTQHQQTTPLTARPEPKRRFVPSKWEHKKIMKIVRAIRQGRIVAHAPGRERPAFYNLWSDADEARADHPMHMPAPKLPLPSHVESYNPPAEYLFGDDEKAEWEAAEPEDRKLPFLPAKYAALRLVPGYDQALHERFQRCLDLYMAPRMRRKRLDIDDPDQLLPKLPAPRDLRPFPTHTDVVYAHAPWRIRTVSIDPSGAWLLTGPDDGHVRLWDAALGRCVATWDMNAGVARADRSPVYCVQWCPNRTFGIAAAVSVGRVTLLAPPQCGKTMYEASLAHLTTPHAAEDAATAQWTRASEADRAAGVCVRIDVRNNKHASLVPKYVRWHARGDYFATVSPEAAGEAVLIHQVSKHRSQAPFRRTRRAGNSAMAVQCVCFHPSRPWLFVATQRYVRVYDLVQQSLVKTLQPGVRWISSLDVHPSGDHVIIGSYDRRVLWFDLDLSERPYKALRYHSRAVRAVAYHPRFPLFASAADDGTVHVYHGTVYSDLLQNALLVPLKILRGHAVQDALGVLSIAWHPTLPWLVSAGADGDARLWTP.

Basic and acidic residues predominate over residues 1 to 52; that stretch reads MAVDKGRRPVPPERRAQGRKRAEPGDVTIRETRTRPVHTPEPEPELLAKDGI. Disordered regions lie at residues 1-153 and 191-231; these read MAVD…VKEG and ESRN…STED. Positions 53–71 are enriched in acidic residues; it reads LELEDDDDNDDDDDDDDDD. Positions 72 to 83 are enriched in basic and acidic residues; sequence KSNHHDGAPKNE. The segment covering 100–135 has biased composition (acidic residues); sequence DDGDEDEEEDDEDEDEDASDDEAFDSDDLENWDEEA. 6 WD repeats span residues 509–549, 559–599, 694–732, 735–774, 778–817, and 833–864; these read AHAP…CVAT, ADRS…KTMY, NSAM…LVKT, PGVR…RPYK, YHSR…DLLQ, and QDAL…LWTP.

It belongs to the WD repeat BOP1/ERB1 family. Component of the NOP7 complex, composed of ERB1, NOP7 and YTM1. The complex is held together by ERB1, which interacts with NOP7 via its N-terminal domain and with YTM1 via a high-affinity interaction between the seven-bladed beta-propeller domains of the 2 proteins. The NOP7 complex associates with the 66S pre-ribosome.

It is found in the nucleus. Its subcellular location is the nucleolus. It localises to the nucleoplasm. Functionally, component of the NOP7 complex, which is required for maturation of the 25S and 5.8S ribosomal RNAs and formation of the 60S ribosome. The polypeptide is Ribosome biogenesis protein ERB1 (Malassezia globosa (strain ATCC MYA-4612 / CBS 7966) (Dandruff-associated fungus)).